We begin with the raw amino-acid sequence, 542 residues long: La-related protein 7 homolog (542 aa).

In terms of domain architecture, HTH La-type RNA-binding spans 112–239; the sequence is VAEELDIKES…KRRFPFNLEQ (128 aa). The region spanning 247 to 335 is the RRM domain; the sequence is RTLYIDFLPP…GSIRIITYKK (89 aa). In terms of domain architecture, xRRM spans 374-542; it reads EIKQNCLIKI…KQNITQNYNK (169 aa).

It belongs to the LARP7 family. As to quaternary structure, component of the telomerase holoenzyme complex, composed of the catalytic core (the catalytic subunit TERT, the telomerase RNA template component TER and TAP65/p65), which is associated with two heterotrimeric subcomplexes: (i) the replication protein A (RPA)-related subcomplex, composed of TEB1, RPA2/TEB2 and RPA3/TEB3 and (ii) the CST-like subcomplex, composed of TAP75/p75, TAP45/p45 and TAP19/p19. TEB1 and the CST-like subcomplex are tethered to the catalytic core by TAP50/p50.

The protein resides in the chromosome. Its subcellular location is the telomere. Its function is as follows. RNA-binding protein required for assembly of the holoenzyme telomerase ribonucleoprotein (RNP) complex. Telomerase is an essential ribonucleoprotein enzyme that copies new telomeric repeats onto chromosome ends by repetitively synthesizing the short telomere-repeat sequence 5'-TTGGGG-3' using an RNA template component TER. TAP65/p65 specifically binds telomerase RNA template TER and is required for biogenesis and placement of the TER stem-terminus element: TAP65/p65 first protects the 3'-end of TER from degradation and acts as a chaperone to correctly fold TER for protein binding; it then bends TER stem-loop IV to position it for interaction of stem-loop IV with catalytic TERT RNA-binding domain. This Tetrahymena thermophila (strain SB210) protein is La-related protein 7 homolog.